A 377-amino-acid chain; its full sequence is Flagellin C (377 aa).

Coiled coils occupy residues 103 to 129 and 301 to 340; these read SNSK…IAET and VDSH…KDTD.

Belongs to the bacterial flagellin family. In terms of assembly, heteromer of multiple flagellin subunits including FlaA, FlaB, FlaC, FlaD and possibly FlaE.

The protein resides in the secreted. Its subcellular location is the bacterial flagellum. Its function is as follows. Flagellin is the subunit protein which polymerizes to form the filaments of bacterial flagella. FlaC is not essential for flagellar synthesis and motility. This is Flagellin C (flaC) from Vibrio anguillarum (Listonella anguillarum).